We begin with the raw amino-acid sequence, 825 residues long: Zinc finger protein 229 (825 aa).

Positions 1-26 (METLTSRHEKRALHSQASAISQDREE) are disordered. The 75-residue stretch at 34–108 (LSFKDVAVVF…SHKELSSCKI (75 aa)) folds into the KRAB domain. A C2H2-type 1; degenerate zinc finger spans residues 291–315 (KLCQYDEFSEGLRHSAHLNRHQRVP). 7 C2H2-type zinc fingers span residues 349-371 (YRCD…QGVH), 377-399 (YKCE…QRVH), 405-427 (YKCS…QRLH), 433-455 (YTCS…QHIH), 461-483 (YSCG…QKTH), 489-511 (YQCD…QRVH), and 517-539 (YKCN…QRLH). Residue Lys543 forms a Glycyl lysine isopeptide (Lys-Gly) (interchain with G-Cter in SUMO2) linkage. 10 consecutive C2H2-type zinc fingers follow at residues 545–566 (YKCE…QRVH), 572–594 (YKCS…QRVH), 600–622 (YVCD…QRVH), 628–650 (YKCA…QRVH), 656–678 (YRCQ…QRVH), 684–706 (YTCD…QRLH), 712–734 (YTCC…KRVH), 740–762 (YRCH…QRVH), 768–790 (YKCE…QRVH), and 796–818 (YTCG…QRVH).

This sequence belongs to the krueppel C2H2-type zinc-finger protein family.

It localises to the nucleus. Functionally, may be involved in transcriptional regulation. This Homo sapiens (Human) protein is Zinc finger protein 229.